The chain runs to 335 residues: Urokinase plasminogen activator surface receptor (335 aa).

The signal sequence occupies residues 1 to 22 (MGHPPLLPLLLLLHTCVPASWG). UPAR/Ly6 domains lie at 23–114 (LRCM…RSRY), 115–213 (LECI…PQNG), and 214–305 (RQCY…YRSG). Intrachain disulfides connect C25-C46, C28-C34, and C39-C67. N74 is a glycosylation site (N-linked (GlcNAc...) asparagine). 11 disulfides stabilise this stretch: C93–C98, C117–C144, C120–C127, C137–C169, C175–C192, C193–C198, C216–C244, C219–C227, C237–C263, C269–C287, and C288–C293. N-linked (GlcNAc...) asparagine glycosylation is found at N184, N194, N222, and N255. The GPI-anchor amidated glycine moiety is linked to residue G305. A propeptide spans 306-335 (AAPQPGPAHLSLTITLLMTARLWGGTLLWT) (removed in mature form).

In terms of assembly, monomer. Interacts with MRC2. Interacts (via the UPAR/Ly6 domains) with SRPX2. Interacts with FAP (seprase); the interaction occurs at the cell surface of invadopodia membrane. Interacts with SORL1 (via N-terminal ectodomain); this interaction decreases PLAUR internalization. The ternary complex composed of PLAUR-PLAU-SERPINE1 also interacts with SORL1. Interacts with CD82; this interaction prevents PLAUR from binding to its high affinity ligand PLAU. As to expression, expressed in neurons of the rolandic area of the brain (at protein level). Expressed in the brain.

The protein localises to the cell membrane. It localises to the cell projection. The protein resides in the invadopodium membrane. It is found in the secreted. Functionally, acts as a receptor for urokinase plasminogen activator. Plays a role in localizing and promoting plasmin formation. Mediates the proteolysis-independent signal transduction activation effects of U-PA. It is subject to negative-feedback regulation by U-PA which cleaves it into an inactive form. The chain is Urokinase plasminogen activator surface receptor (PLAUR) from Homo sapiens (Human).